Here is a 362-residue protein sequence, read N- to C-terminus: F-box protein At2g14710 (362 aa).

Positions 1 to 47 (MAHLKNLPWELIEEILSRVPPKSLVRFRTVSKQWNALFDDKTFINNH) constitute an F-box domain.

The sequence is that of F-box protein At2g14710 from Arabidopsis thaliana (Mouse-ear cress).